Here is a 128-residue protein sequence, read N- to C-terminus: Cytochrome c oxidase subunit 5B, mitochondrial (128 aa).

The N-terminal 30 residues, 1-30, are a transit peptide targeting the mitochondrion; sequence MKRGSAALEVRELKMQTPTASCVLSTQRAN. N6-acetyllysine is present on residues K67 and K85. C90, C92, C112, and C115 together coordinate Zn(2+). The residue at position 120 (K120) is an N6-acetyllysine.

The protein belongs to the cytochrome c oxidase 5b family. As to expression, expressed in testis. Not expressed in brain, heart, liver, kidney, spleen, lung, duodenum, muscle, epididymis, vagina, uterus and ovary.

The protein resides in the mitochondrion inner membrane. This protein is one of the nuclear-coded polypeptide chains of cytochrome c oxidase, the terminal oxidase in mitochondrial electron transport. In Vulpes vulpes (Red fox), this protein is Cytochrome c oxidase subunit 5B, mitochondrial.